A 2472-amino-acid chain; its full sequence is Highly reducing polyketide synthase xilA (2472 aa).

The 417-residue stretch at 1–417 (MPGGVRDLPA…GTNGHCIIDD (417 aa)) folds into the Ketosynthase family 3 (KS3) domain. Active-site for beta-ketoacyl synthase activity residues include C162, H298, and H340. Positions 442–502 (NDINGKSGTN…QRKHHHPKTD (61 aa)) are disordered. Low complexity predominate over residues 450 to 489 (TNGANGANRVNGVNGVNGVNGVNGANGHSNASLLSNGSNN). One can recognise a Malonyl-CoA:ACP transacylase (MAT) domain in the interval 597 to 932 (FIFTGQGAQW…CTGTLFVHNV (336 aa)). The interval 991-1129 (HDLLGSKVPG…GQIKVEVAKF (139 aa)) is N-terminal hotdog fold. The PKS/mFAS DH domain occupies 991-1294 (HDLLGSKVPG…FTSLNNEQES (304 aa)). The active-site Proton acceptor; for dehydratase activity is the H1023. The C-terminal hotdog fold stretch occupies residues 1141–1294 (GRLVDAQTWY…FTSLNNEQES (154 aa)). The Proton donor; for dehydratase activity role is filled by D1207. The methyltransferase (CMeT) domain stretch occupies residues 1289-1505 (NNEQESPSTG…IITVHALRSI (217 aa)). The Enoyl reductase (ER) domain maps to 1724 to 2036 (GLLTSLYFKP…KGTHIGKMVI (313 aa)). One can recognise a Ketoreductase (KR) domain in the interval 2060–2239 (ASYILVGGLS…ATTVSLGFIK (180 aa)). The Carrier domain occupies 2391 to 2469 (ETVKLVSDAI…SIARVIVEEA (79 aa)). S2428 bears the O-(pantetheine 4'-phosphoryl)serine mark.

It depends on pantetheine 4'-phosphate as a cofactor.

It functions in the pathway secondary metabolite biosynthesis. Its function is as follows. Highly reducing polyketide synthase; part of the gene cluster that mediates the biosynthesis of the 6-methyl-2-pyrone derivative xylariolide D. XilA produces the 5-alkyl-6-methyl-2-pyrone backbone called prexylariolide D via sequential condensations of 4 malonyl-CoA units with one acetyl-CoA starter unit. During the biosynthesis, the linear polyketide chain is branched by the addition of an acetyl unit as the origin of the methyl group at the 2-pyrone ring. Prexylariolide D is then hydroxylated at the side chain by xilC to form the final product, xylariolide D. The polypeptide is Highly reducing polyketide synthase xilA (Penicillium crustosum (Blue mold fungus)).